Here is a 224-residue protein sequence, read N- to C-terminus: Large ribosomal subunit protein uL3 (224 aa).

At glutamine 158 the chain carries N5-methylglutamine.

This sequence belongs to the universal ribosomal protein uL3 family. Part of the 50S ribosomal subunit. Forms a cluster with proteins L14 and L19. Post-translationally, methylated by PrmB.

Its function is as follows. One of the primary rRNA binding proteins, it binds directly near the 3'-end of the 23S rRNA, where it nucleates assembly of the 50S subunit. In Acidovorax sp. (strain JS42), this protein is Large ribosomal subunit protein uL3.